Here is a 173-residue protein sequence, read N- to C-terminus: Bifunctional protein PyrR (173 aa).

Residues 93 to 105 (VILVDDVLYTGRT) carry the PRPP-binding motif.

Belongs to the purine/pyrimidine phosphoribosyltransferase family. PyrR subfamily. As to quaternary structure, homodimer and homohexamer; in equilibrium.

The enzyme catalyses UMP + diphosphate = 5-phospho-alpha-D-ribose 1-diphosphate + uracil. Its function is as follows. Regulates transcriptional attenuation of the pyrimidine nucleotide (pyr) operon by binding in a uridine-dependent manner to specific sites on pyr mRNA. This disrupts an antiterminator hairpin in the RNA and favors formation of a downstream transcription terminator, leading to a reduced expression of downstream genes. Also displays a weak uracil phosphoribosyltransferase activity which is not physiologically significant. The protein is Bifunctional protein PyrR of Streptococcus uberis (strain ATCC BAA-854 / 0140J).